A 113-amino-acid chain; its full sequence is Small ribosomal subunit protein bS6 (113 aa).

Belongs to the bacterial ribosomal protein bS6 family.

Binds together with bS18 to 16S ribosomal RNA. In Wigglesworthia glossinidia brevipalpis, this protein is Small ribosomal subunit protein bS6.